We begin with the raw amino-acid sequence, 754 residues long: 5-methyltetrahydropteroyltriglutamate--homocysteine methyltransferase (754 aa).

Residues 17–20 (RELK) and Lys-117 contribute to the 5-methyltetrahydropteroyltri-L-glutamate site. Residues 431 to 433 (IGS) and Glu-484 contribute to the L-homocysteine site. Residues 431–433 (IGS) and Glu-484 contribute to the L-methionine site. 5-methyltetrahydropteroyltri-L-glutamate contacts are provided by residues 515-516 (RC) and Trp-561. Asp-599 lines the L-homocysteine pocket. Asp-599 is a binding site for L-methionine. Glu-605 is a binding site for 5-methyltetrahydropteroyltri-L-glutamate. The Zn(2+) site is built by His-641, Cys-643, and Glu-665. Residue His-694 is the Proton donor of the active site. Position 726 (Cys-726) interacts with Zn(2+).

Belongs to the vitamin-B12 independent methionine synthase family. Zn(2+) is required as a cofactor.

It catalyses the reaction 5-methyltetrahydropteroyltri-L-glutamate + L-homocysteine = tetrahydropteroyltri-L-glutamate + L-methionine. Its pathway is amino-acid biosynthesis; L-methionine biosynthesis via de novo pathway; L-methionine from L-homocysteine (MetE route): step 1/1. Catalyzes the transfer of a methyl group from 5-methyltetrahydrofolate to homocysteine resulting in methionine formation. The sequence is that of 5-methyltetrahydropteroyltriglutamate--homocysteine methyltransferase from Salmonella typhi.